The chain runs to 572 residues: Golgi apyrase (572 aa).

Residues 1 to 470 (MVRKYGIFID…KHWMRLFPNK (470 aa)) are Lumenal-facing. The active-site Proton acceptor is the E145. Residues 471 to 491 (LFFILSFIFCLFFLFSLVLFG) traverse the membrane as a helical segment. The Cytoplasmic segment spans residues 492–572 (YDPKRRQRFK…RERTPRSPFP (81 aa)).

It belongs to the GDA1/CD39 NTPase family. Requires Ca(2+) as cofactor. The cofactor is Mg(2+). It depends on Mn(2+) as a cofactor.

It is found in the golgi apparatus. It localises to the membrane. It carries out the reaction a ribonucleoside 5'-triphosphate + 2 H2O = a ribonucleoside 5'-phosphate + 2 phosphate + 2 H(+). Its pathway is protein modification; protein glycosylation. Catalyzes the hydrolysis of phosphoanhydride bonds of nucleoside tri- and di-phosphates. Required for Golgi glycosylation and cell wall integrity. Involved in N-mannosylation of proteins in Golgi. The polypeptide is Golgi apyrase (Schizosaccharomyces pombe (strain 972 / ATCC 24843) (Fission yeast)).